Here is a 157-residue protein sequence, read N- to C-terminus: Transcription elongation factor GreA (157 aa).

It belongs to the GreA/GreB family.

Necessary for efficient RNA polymerase transcription elongation past template-encoded arresting sites. The arresting sites in DNA have the property of trapping a certain fraction of elongating RNA polymerases that pass through, resulting in locked ternary complexes. Cleavage of the nascent transcript by cleavage factors such as GreA or GreB allows the resumption of elongation from the new 3'terminus. GreA releases sequences of 2 to 3 nucleotides. The polypeptide is Transcription elongation factor GreA (Bartonella henselae (strain ATCC 49882 / DSM 28221 / CCUG 30454 / Houston 1) (Rochalimaea henselae)).